The primary structure comprises 1663 residues: Cortactin-binding protein 2 (1663 aa).

5 disordered regions span residues 1 to 23 (MATD…AGAA), 203 to 222 (KKKT…RSTE), 359 to 440 (QASH…LHPG), 454 to 478 (GNAN…SPTS), and 498 to 617 (RFTS…KPSI). Residues 119–276 (KKMQERMSAQ…EQLKRGSDSK (158 aa)) are a coiled coil. Positions 386–396 (PSTGSTPDPTS) are enriched in low complexity. An Asymmetric dimethylarginine modification is found at Arg-498. Over residues 583–593 (TVASPPSSLPQ) the composition is skewed to polar residues. ANK repeat units follow at residues 709-739 (GRPT…DINY), 743-772 (DGHS…QVNA), 776-805 (NGFT…NINH), 809-838 (GGQT…NRSV), 842-871 (DGWT…PARG), and 912-942 (EGWT…EPER). The tract at residues 1446–1485 (NKKKGESGAWRKVNTSPRRKSGRFSLPTWNKPDLSTEGMK) is disordered. Residue Ser-1524 is modified to Phosphoserine. Positions 1580–1663 (SQKEVSPLSS…KNEHLEKPNK (84 aa)) are disordered. A compositionally biased stretch (polar residues) spans 1582–1599 (KEVSPLSSHQTTECSNSK). Residues 1624–1638 (SQNTKRSSSSSNTRQ) are compositionally biased toward low complexity. A compositionally biased stretch (basic and acidic residues) spans 1645–1663 (SKEENWNLHKNEHLEKPNK).

In terms of assembly, interacts with CTTN/cortactin SH3 domain. Interacts with STRN, STRN4/zinedin and MOB4/phocein; this interactions mediate the association with the STRIPAK core complex and may regulate dendritic spine distribution of the STRIPAK complex in hippocampal neurons. Activation of glutamate receptors weakens the interaction with STRN and STRN4.

The protein localises to the cytoplasm. It is found in the cell cortex. The protein resides in the cell projection. Its subcellular location is the dendritic spine. Its function is as follows. Regulates the dendritic spine distribution of CTTN/cortactin in hippocampal neurons, and thus controls dendritic spinogenesis and dendritic spine maintenance. Associates with the striatin-interacting phosphatase and kinase (STRIPAK) core complex to regulate dendritic spine distribution of the STRIPAK complex in hippocampal neurons. This is Cortactin-binding protein 2 (CTTNBP2) from Pongo abelii (Sumatran orangutan).